We begin with the raw amino-acid sequence, 96 residues long: Co-chaperonin GroES (96 aa).

This sequence belongs to the GroES chaperonin family. In terms of assembly, heptamer of 7 subunits arranged in a ring. Interacts with the chaperonin GroEL.

It is found in the cytoplasm. In terms of biological role, together with the chaperonin GroEL, plays an essential role in assisting protein folding. The GroEL-GroES system forms a nano-cage that allows encapsulation of the non-native substrate proteins and provides a physical environment optimized to promote and accelerate protein folding. GroES binds to the apical surface of the GroEL ring, thereby capping the opening of the GroEL channel. The chain is Co-chaperonin GroES from Shewanella baltica (strain OS223).